The following is a 251-amino-acid chain: Probable ATP-dependent transporter ycf16 (251 aa).

The ABC transporter domain occupies 8-250; that stretch reads LEIKNLKACI…ELESKGYEWL (243 aa). ATP is bound at residue 40–47; that stretch reads GPNGSGKS.

It belongs to the ABC transporter superfamily. Ycf16 family.

Its subcellular location is the plastid. The protein localises to the chloroplast. The protein is Probable ATP-dependent transporter ycf16 (ycf16) of Trieres chinensis (Marine centric diatom).